Here is a 278-residue protein sequence, read N- to C-terminus: Putative transposase for insertion sequence element IS986/IS6110 (278 aa).

Residues 101–268 (GPPAPNRLWV…VPPVELEAAY (168 aa)) form the Integrase catalytic domain.

Its function is as follows. Involved in the transposition of the insertion sequence. This Mycobacterium bovis (strain ATCC BAA-935 / AF2122/97) protein is Putative transposase for insertion sequence element IS986/IS6110.